Here is a 156-residue protein sequence, read N- to C-terminus: Small ribosomal subunit protein uS7 (156 aa).

It belongs to the universal ribosomal protein uS7 family. As to quaternary structure, part of the 30S ribosomal subunit. Contacts proteins S9 and S11.

One of the primary rRNA binding proteins, it binds directly to 16S rRNA where it nucleates assembly of the head domain of the 30S subunit. Is located at the subunit interface close to the decoding center, probably blocks exit of the E-site tRNA. This chain is Small ribosomal subunit protein uS7, found in Mycobacteroides abscessus (strain ATCC 19977 / DSM 44196 / CCUG 20993 / CIP 104536 / JCM 13569 / NCTC 13031 / TMC 1543 / L948) (Mycobacterium abscessus).